The following is a 229-amino-acid chain: GTP-binding protein Di-Ras3 (229 aa).

Residues 44-51, 63-69, 91-95, 152-155, and 182-183 each bind GTP; these read GTAGVGKS, RHEYLPT, DSKSG, NKSD, and AK. Positions 66–74 match the Effector region motif; it reads YLPTIENTY. Cysteine methyl ester is present on cysteine 226. The S-geranylgeranyl cysteine moiety is linked to residue cysteine 226. Positions 227 to 229 are cleaved as a propeptide — removed in mature form; the sequence is IIM.

Belongs to the small GTPase superfamily. Di-Ras family. As to expression, expressed in normal ovarian and breast epithelial cells but not in ovarian and breast cancers.

Its subcellular location is the cell membrane. The protein is GTP-binding protein Di-Ras3 (DIRAS3) of Homo sapiens (Human).